The following is a 230-amino-acid chain: Large ribosomal subunit protein uL1 (230 aa).

The protein belongs to the universal ribosomal protein uL1 family. Part of the 50S ribosomal subunit.

Functionally, binds directly to 23S rRNA. The L1 stalk is quite mobile in the ribosome, and is involved in E site tRNA release. Its function is as follows. Protein L1 is also a translational repressor protein, it controls the translation of the L11 operon by binding to its mRNA. This chain is Large ribosomal subunit protein uL1, found in Nitrobacter winogradskyi (strain ATCC 25391 / DSM 10237 / CIP 104748 / NCIMB 11846 / Nb-255).